The sequence spans 631 residues: Phosphomethylpyrimidine synthase (631 aa).

The segment at 54–80 (TLVGGDKDKPRYETNEPIPVYDTSGPY) is disordered. Over residues 58-67 (GDKDKPRYET) the composition is skewed to basic and acidic residues. Substrate-binding positions include Asn-239, Met-268, Tyr-297, His-333, 353 to 355 (SRG), 394 to 397 (DGLR), and Glu-433. Residue His-437 coordinates Zn(2+). Tyr-460 serves as a coordination point for substrate. Residue His-501 coordinates Zn(2+). Cys-581, Cys-584, and Cys-589 together coordinate [4Fe-4S] cluster.

Belongs to the ThiC family. In terms of assembly, homodimer. It depends on [4Fe-4S] cluster as a cofactor.

The enzyme catalyses 5-amino-1-(5-phospho-beta-D-ribosyl)imidazole + S-adenosyl-L-methionine = 4-amino-2-methyl-5-(phosphooxymethyl)pyrimidine + CO + 5'-deoxyadenosine + formate + L-methionine + 3 H(+). The protein operates within cofactor biosynthesis; thiamine diphosphate biosynthesis. In terms of biological role, catalyzes the synthesis of the hydroxymethylpyrimidine phosphate (HMP-P) moiety of thiamine from aminoimidazole ribotide (AIR) in a radical S-adenosyl-L-methionine (SAM)-dependent reaction. This chain is Phosphomethylpyrimidine synthase, found in Klebsiella pneumoniae subsp. pneumoniae (strain ATCC 700721 / MGH 78578).